We begin with the raw amino-acid sequence, 378 residues long: UPF0754 membrane protein BCG9842_B4423 (378 aa).

The chain crosses the membrane as a helical span at residues 357–377; sequence YLGALLGGIIGLVQGLLLLFL.

Belongs to the UPF0754 family.

It is found in the cell membrane. The sequence is that of UPF0754 membrane protein BCG9842_B4423 from Bacillus cereus (strain G9842).